A 65-amino-acid polypeptide reads, in one-letter code: U11-theraphotoxin-Cg1b (65 aa).

A signal peptide spans 1–21 (MKTTILVVILGLTLLFALSAA). Residues 22-29 (TELKDEER) constitute a propeptide that is removed on maturation. 3 disulfide bridges follow: Cys31-Cys45, Cys38-Cys50, and Cys44-Cys57.

This sequence belongs to the neurotoxin 10 (Hwtx-1) family. 32 (Jztx-16) subfamily. As to expression, expressed by the venom gland.

It is found in the secreted. Functionally, probable ion channel inhibitor. This chain is U11-theraphotoxin-Cg1b, found in Chilobrachys guangxiensis (Chinese earth tiger tarantula).